Reading from the N-terminus, the 313-residue chain is Short-chain dehydrogenase/reductase family 9C member 7 (313 aa).

Residue 29 to 53 (FITGCDSGFGNLLARQLVDRGMRVL) coordinates NADP(+). Residue Ser160 coordinates substrate. The active-site Proton acceptor is the Tyr172. The residue at position 185 (Ser185) is a Phosphoserine.

It belongs to the short-chain dehydrogenases/reductases (SDR) family.

It is found in the cytoplasm. The catalysed reaction is a N-[omega-(9R,10R)-epoxy-(13R)-hydroxy-(11E)-octadecenoyloxy]acyl-beta-D-glucosyl-(1&lt;-&gt;1)-sphing-4E-enine + NAD(+) = a N-[omega-(9R,10R)-epoxy-13-oxo-(11E)-octadecenoyloxy]acyl-beta-D-glucosyl-(1&lt;-&gt;1)-sphing-4E-enine + NADH + H(+). It catalyses the reaction a N-[omega-(9R,10R)-epoxy-(13R)-hydroxy-(11E)-octadecenoyloxy]-acylsphing-4E-enine + NAD(+) = a N-[omega-(9R,10R)-epoxy-13-oxo-(11E)-octadecenoyloxy]-acylsphing-4E-enine + NADH + H(+). Its function is as follows. Plays a crucial role in the formation of the epidermal permeability barrier. Catalyzes the NAD+-dependent dehydrogenation of the linoleate 9,10-trans-epoxy-11E-13-alcohol esterified in omega-O-acylceramides (such as in N-[omega-(9R,10R)-epoxy-(13R)-hydroxy-(11E)-octadecenoyloxy]-acylsphing-4E-enine) to the corresponding 13-ketone, the reactive moiety required for binding of epidermal ceramides to proteins. Displays weak conversion of all-trans-retinal to all-trans-retinol in the presence of NADH. Has apparently no steroid dehydrogenase activity. The chain is Short-chain dehydrogenase/reductase family 9C member 7 (SDR9C7) from Bos taurus (Bovine).